Reading from the N-terminus, the 189-residue chain is Elongation factor P (189 aa).

It belongs to the elongation factor P family.

Its subcellular location is the cytoplasm. Its pathway is protein biosynthesis; polypeptide chain elongation. Involved in peptide bond synthesis. Stimulates efficient translation and peptide-bond synthesis on native or reconstituted 70S ribosomes in vitro. Probably functions indirectly by altering the affinity of the ribosome for aminoacyl-tRNA, thus increasing their reactivity as acceptors for peptidyl transferase. The protein is Elongation factor P of Sinorhizobium fredii (strain NBRC 101917 / NGR234).